Consider the following 76-residue polypeptide: ATP synthase subunit 9, mitochondrial (76 aa).

The next 2 membrane-spanning stretches (helical) occupy residues 14–34 (ISTI…AALI) and 48–68 (FPFA…CLMV).

This sequence belongs to the ATPase C chain family. F-type ATPases have 2 components, CF(1) - the catalytic core - and CF(0) - the membrane proton channel. CF(1) has five subunits: alpha(3), beta(3), gamma(1), delta(1), epsilon(1). CF(0) has three main subunits: a, b and c.

The protein localises to the mitochondrion membrane. Its function is as follows. Mitochondrial membrane ATP synthase (F(1)F(0) ATP synthase or Complex V) produces ATP from ADP in the presence of a proton gradient across the membrane which is generated by electron transport complexes of the respiratory chain. F-type ATPases consist of two structural domains, F(1) - containing the extramembraneous catalytic core and F(0) - containing the membrane proton channel, linked together by a central stalk and a peripheral stalk. During catalysis, ATP synthesis in the catalytic domain of F(1) is coupled via a rotary mechanism of the central stalk subunits to proton translocation. Part of the complex F(0) domain. A homomeric c-ring of probably 10 subunits is part of the complex rotary element. The polypeptide is ATP synthase subunit 9, mitochondrial (ATP9) (Cyberlindnera mrakii (Yeast)).